The primary structure comprises 381 residues: Cytochrome b (381 aa).

4 helical membrane passes run 34–54, 78–99, 114–134, and 179–199; these read FGSL…FLAM, WLIR…YLHI, WNTG…GYVL, and FFTF…VHLL. Heme b is bound by residues His84 and His98. Heme b contacts are provided by His183 and His197. Residue His202 coordinates a ubiquinone. 4 helical membrane-spanning segments follow: residues 227–247, 289–309, 321–341, and 348–368; these read YKDL…TLFS, LGGV…PTLH, LTQI…WIGG, and FIII…LLMP.

Belongs to the cytochrome b family. In terms of assembly, the cytochrome bc1 complex contains 3 respiratory subunits (MT-CYB, CYC1 and UQCRFS1), 2 core proteins (UQCRC1 and UQCRC2) and probably 6 low-molecular weight proteins. Heme b is required as a cofactor.

It is found in the mitochondrion inner membrane. Its function is as follows. Component of the ubiquinol-cytochrome c reductase complex (complex III or cytochrome b-c1 complex) that is part of the mitochondrial respiratory chain. The b-c1 complex mediates electron transfer from ubiquinol to cytochrome c. Contributes to the generation of a proton gradient across the mitochondrial membrane that is then used for ATP synthesis. The chain is Cytochrome b (MT-CYB) from Chelonia mydas (Green sea-turtle).